Consider the following 141-residue polypeptide: Nucleoside diphosphate kinase (141 aa).

6 residues coordinate ATP: Lys11, Phe59, Arg87, Thr93, Arg104, and Asn114. The active-site Pros-phosphohistidine intermediate is His117.

The protein belongs to the NDK family. As to quaternary structure, homotetramer. The cofactor is Mg(2+).

The protein resides in the cytoplasm. The enzyme catalyses a 2'-deoxyribonucleoside 5'-diphosphate + ATP = a 2'-deoxyribonucleoside 5'-triphosphate + ADP. It carries out the reaction a ribonucleoside 5'-diphosphate + ATP = a ribonucleoside 5'-triphosphate + ADP. Functionally, major role in the synthesis of nucleoside triphosphates other than ATP. The ATP gamma phosphate is transferred to the NDP beta phosphate via a ping-pong mechanism, using a phosphorylated active-site intermediate. In Nitrosospira multiformis (strain ATCC 25196 / NCIMB 11849 / C 71), this protein is Nucleoside diphosphate kinase.